The chain runs to 723 residues: MGLCLRWRRLGFPLPGFRRCELHTVREAPIPTPPHWLAERFGLFEELWTAQVKRLASMTQKKARTIKISLPEGQKVDAVAWNTTPYQLAQQISSTLADTAVAAEVNGELYDLDRPLETDCHLRFLTFDSPEGKAVFWRSSAHVLGAAAEQHLGAVLCRGPSTESGFYLDFFLGKERTVRSTELPTLERICQEIITAAQPFRRLEASRGQLRQLFKDNHFKLHVIEEKVTGTTATVYGCGMSVDLCQGPHLRHTGQIGALKLLTNSSALWRSSEAPETLQRVSGISFPKAELLRNWEARREEAELRDHRRIGKEQELFFFHELSPGSCFFLPRGTRIYNALVAFIRAEYARRGFSEVKTPTLFSTKLWEQSGHWEHYRAHMFSLKPPGTDGVDSSQSGHPARCPKDTLALKPMNCPAHCLMFAHRPRSWRELPVRLADFGVLHRAEASGSLGGLTRLWRFQQDDAHIFCAPSQLEAEIRGCLDFLRSVYSVLGFSFHLALSTRPPGFLGEPHLWDQAEKVLQQALEEFGEPWNLNPGDGAFYGPKIDVHLHDALGRPHQCGTIQLDFQLPLRFDLQYKGPAGAPECPVLIHRAVLGSVERLLGVLAESCGGRWPLWLSPFQVVVIPVRTEQEDYARQVQQCLQAAGLVSDLDADCGLTLSRRVRRAQLAHYNFQFVVGQREQSQMSVNVRTRDNRQLGERGLAESVQRLLELQDARVPNAEELF.

S57 is modified (phosphoserine). The TGS domain occupies 64-126 (RTIKISLPEG…ETDCHLRFLT (63 aa)).

It belongs to the class-II aminoacyl-tRNA synthetase family. As to quaternary structure, homodimer.

The protein resides in the mitochondrion matrix. The catalysed reaction is tRNA(Thr) + L-threonine + ATP = L-threonyl-tRNA(Thr) + AMP + diphosphate + H(+). Its function is as follows. Catalyzes the attachment of threonine to tRNA(Thr) in a two-step reaction: threonine is first activated by ATP to form Thr-AMP and then transferred to the acceptor end of tRNA(Thr). Also edits incorrectly charged tRNA(Thr) via its editing domain. The chain is Threonine--tRNA ligase, mitochondrial (Tars2) from Rattus norvegicus (Rat).